The following is a 558-amino-acid chain: CTP synthase (558 aa).

An amidoligase domain region spans residues 1–270 (MTKYVFVTGG…DDLICRELDL (270 aa)). Position 13 (serine 13) interacts with CTP. Serine 13 contacts UTP. ATP is bound by residues 14–19 (SLGKGI) and aspartate 71. Residues aspartate 71 and glutamate 144 each contribute to the Mg(2+) site. CTP contacts are provided by residues 151–153 (DIE), 191–196 (KTKPTQ), and lysine 227. UTP-binding positions include 191–196 (KTKPTQ) and lysine 227. The 253-residue stretch at 295–547 (TIGMVGKYVE…ISAALEHQKK (253 aa)) folds into the Glutamine amidotransferase type-1 domain. L-glutamine is bound at residue glycine 356. Cysteine 383 functions as the Nucleophile; for glutamine hydrolysis in the catalytic mechanism. L-glutamine is bound by residues 384 to 387 (LGMQ), glutamate 407, and arginine 473. Residues histidine 520 and glutamate 522 contribute to the active site.

Belongs to the CTP synthase family. As to quaternary structure, homotetramer.

It catalyses the reaction UTP + L-glutamine + ATP + H2O = CTP + L-glutamate + ADP + phosphate + 2 H(+). The enzyme catalyses L-glutamine + H2O = L-glutamate + NH4(+). It carries out the reaction UTP + NH4(+) + ATP = CTP + ADP + phosphate + 2 H(+). It functions in the pathway pyrimidine metabolism; CTP biosynthesis via de novo pathway; CTP from UDP: step 2/2. With respect to regulation, allosterically activated by GTP, when glutamine is the substrate; GTP has no effect on the reaction when ammonia is the substrate. The allosteric effector GTP functions by stabilizing the protein conformation that binds the tetrahedral intermediate(s) formed during glutamine hydrolysis. Inhibited by the product CTP, via allosteric rather than competitive inhibition. Catalyzes the ATP-dependent amination of UTP to CTP with either L-glutamine or ammonia as the source of nitrogen. Regulates intracellular CTP levels through interactions with the four ribonucleotide triphosphates. This chain is CTP synthase, found in Polynucleobacter necessarius subsp. necessarius (strain STIR1).